The primary structure comprises 584 residues: 2-isopropylmalate synthase (584 aa).

One can recognise a Pyruvate carboxyltransferase domain in the interval 45 to 323 (PRWLSTDLRD…SPNLDFSKLD (279 aa)). Positions 54, 262, 264, and 298 each coordinate a divalent metal cation.

This sequence belongs to the alpha-IPM synthase/homocitrate synthase family. LeuA type 2 subfamily. As to quaternary structure, homodimer. Requires a divalent metal cation as cofactor.

It carries out the reaction 3-methyl-2-oxobutanoate + acetyl-CoA + H2O = (2S)-2-isopropylmalate + CoA + H(+). The protein operates within amino-acid biosynthesis; L-leucine biosynthesis; L-leucine from 3-methyl-2-oxobutanoate: step 1/4. Catalyzes the condensation of the acetyl group of acetyl-CoA with 3-methyl-2-oxobutanoate (2-oxoisovalerate) to form 3-carboxy-3-hydroxy-4-methylpentanoate (2-isopropylmalate). In Schizosaccharomyces pombe (strain 972 / ATCC 24843) (Fission yeast), this protein is 2-isopropylmalate synthase (leu3).